The following is a 240-amino-acid chain: Uridylate kinase (240 aa).

An ATP-binding site is contributed by 12–15 (KLSG). The tract at residues 20 to 25 (GEQGNG) is involved in allosteric activation by GTP. Glycine 54 is a UMP binding site. The ATP site is built by glycine 55 and arginine 59. Residues aspartate 74 and 135–142 (TGNPYFST) each bind UMP. Residues asparagine 163, tyrosine 169, and aspartate 172 each coordinate ATP.

It belongs to the UMP kinase family. As to quaternary structure, homohexamer.

The protein resides in the cytoplasm. The enzyme catalyses UMP + ATP = UDP + ADP. It functions in the pathway pyrimidine metabolism; CTP biosynthesis via de novo pathway; UDP from UMP (UMPK route): step 1/1. Allosterically activated by GTP. Inhibited by UTP. Its function is as follows. Catalyzes the reversible phosphorylation of UMP to UDP. The chain is Uridylate kinase from Bacillus velezensis (strain DSM 23117 / BGSC 10A6 / LMG 26770 / FZB42) (Bacillus amyloliquefaciens subsp. plantarum).